We begin with the raw amino-acid sequence, 234 residues long: AA9 family lytic polysaccharide monooxygenase D (234 aa).

An N-terminal signal peptide occupies residues 1-18 (MRIEKLLNAALLAGAVSA). 2 residues coordinate Cu(2+): His-19 and His-95. A disulfide bond links Cys-57 and Cys-182. Residues His-168 and Gln-177 each coordinate O2. Tyr-179 lines the Cu(2+) pocket.

Belongs to the polysaccharide monooxygenase AA9 family. It depends on Cu(2+) as a cofactor.

It localises to the secreted. The enzyme catalyses [(1-&gt;4)-beta-D-glucosyl]n+m + reduced acceptor + O2 = 4-dehydro-beta-D-glucosyl-[(1-&gt;4)-beta-D-glucosyl]n-1 + [(1-&gt;4)-beta-D-glucosyl]m + acceptor + H2O.. In terms of biological role, lytic polysaccharide monooxygenase (LPMO) that depolymerizes crystalline and amorphous polysaccharides via the oxidation of scissile alpha- or beta-(1-4)-glycosidic bonds, yielding C1 or C4 oxidation products. Catalysis by LPMOs requires the reduction of the active-site copper from Cu(II) to Cu(I) by a reducing agent and H(2)O(2) or O(2) as a cosubstrate. This chain is AA9 family lytic polysaccharide monooxygenase D, found in Malbranchea cinnamomea (Thermophilic fungus).